Reading from the N-terminus, the 80-residue chain is RNA-binding protein Hfq (80 aa).

The region spanning 10 to 70 (DLFLNTVRKQ…ISTIMPGQPL (61 aa)) is the Sm domain.

Belongs to the Hfq family. In terms of assembly, homohexamer.

In terms of biological role, RNA chaperone that binds small regulatory RNA (sRNAs) and mRNAs to facilitate mRNA translational regulation in response to envelope stress, environmental stress and changes in metabolite concentrations. Also binds with high specificity to tRNAs. This is RNA-binding protein Hfq from Rhizobium meliloti (strain 1021) (Ensifer meliloti).